A 352-amino-acid chain; its full sequence is UDP-N-acetylglucosamine--N-acetylmuramyl-(pentapeptide) pyrophosphoryl-undecaprenol N-acetylglucosamine transferase (352 aa).

UDP-N-acetyl-alpha-D-glucosamine is bound by residues serine 195 and glutamine 287.

Belongs to the glycosyltransferase 28 family. MurG subfamily.

It is found in the cell membrane. The catalysed reaction is Mur2Ac(oyl-L-Ala-gamma-D-Glu-L-Lys-D-Ala-D-Ala)-di-trans,octa-cis-undecaprenyl diphosphate + UDP-N-acetyl-alpha-D-glucosamine = beta-D-GlcNAc-(1-&gt;4)-Mur2Ac(oyl-L-Ala-gamma-D-Glu-L-Lys-D-Ala-D-Ala)-di-trans,octa-cis-undecaprenyl diphosphate + UDP + H(+). Its pathway is cell wall biogenesis; peptidoglycan biosynthesis. Its function is as follows. Cell wall formation. Catalyzes the transfer of a GlcNAc subunit on undecaprenyl-pyrophosphoryl-MurNAc-pentapeptide (lipid intermediate I) to form undecaprenyl-pyrophosphoryl-MurNAc-(pentapeptide)GlcNAc (lipid intermediate II). The sequence is that of UDP-N-acetylglucosamine--N-acetylmuramyl-(pentapeptide) pyrophosphoryl-undecaprenol N-acetylglucosamine transferase from Streptococcus pneumoniae (strain Taiwan19F-14).